The sequence spans 346 residues: Biotin synthase (346 aa).

A Radical SAM core domain is found at 38–256 (QQVQVSTLLS…IAVARIMMPT (219 aa)). [4Fe-4S] cluster contacts are provided by C53, C57, and C60. 4 residues coordinate [2Fe-2S] cluster: C97, C128, C188, and R260.

It belongs to the radical SAM superfamily. Biotin synthase family. In terms of assembly, homodimer. The cofactor is [4Fe-4S] cluster. [2Fe-2S] cluster serves as cofactor.

The catalysed reaction is (4R,5S)-dethiobiotin + (sulfur carrier)-SH + 2 reduced [2Fe-2S]-[ferredoxin] + 2 S-adenosyl-L-methionine = (sulfur carrier)-H + biotin + 2 5'-deoxyadenosine + 2 L-methionine + 2 oxidized [2Fe-2S]-[ferredoxin]. It participates in cofactor biosynthesis; biotin biosynthesis; biotin from 7,8-diaminononanoate: step 2/2. In terms of biological role, catalyzes the conversion of dethiobiotin (DTB) to biotin by the insertion of a sulfur atom into dethiobiotin via a radical-based mechanism. The protein is Biotin synthase of Salmonella newport (strain SL254).